The following is a 352-amino-acid chain: Fe(3+) ions import ATP-binding protein FbpC 1 (352 aa).

The region spanning 11 to 241 is the ABC transporter domain; the sequence is VELKHITKRF…PASRFMASFM (231 aa). ATP is bound at residue 43 to 50; it reads GPSGCGKT.

It belongs to the ABC transporter superfamily. Fe(3+) ion importer (TC 3.A.1.10) family. As to quaternary structure, the complex is composed of two ATP-binding proteins (FbpC), two transmembrane proteins (FbpB) and a solute-binding protein (FbpA).

The protein resides in the cell inner membrane. It carries out the reaction Fe(3+)(out) + ATP + H2O = Fe(3+)(in) + ADP + phosphate + H(+). In terms of biological role, part of the ABC transporter complex FbpABC involved in Fe(3+) ions import. Responsible for energy coupling to the transport system. This chain is Fe(3+) ions import ATP-binding protein FbpC 1, found in Pectobacterium atrosepticum (strain SCRI 1043 / ATCC BAA-672) (Erwinia carotovora subsp. atroseptica).